Here is a 386-residue protein sequence, read N- to C-terminus: Succinate--CoA ligase [ADP-forming] subunit beta (386 aa).

In terms of domain architecture, ATP-grasp spans 9-244 (KEILRKYGVP…HDEEDPLETR (236 aa)). Residues Lys46, 53–55 (GRG), Glu99, Cys102, and Glu107 each bind ATP. Residues Asn199 and Asp213 each contribute to the Mg(2+) site. Substrate contacts are provided by residues Asn264 and 321–323 (GIM).

Belongs to the succinate/malate CoA ligase beta subunit family. Heterotetramer of two alpha and two beta subunits. Requires Mg(2+) as cofactor.

It carries out the reaction succinate + ATP + CoA = succinyl-CoA + ADP + phosphate. It catalyses the reaction GTP + succinate + CoA = succinyl-CoA + GDP + phosphate. Its pathway is carbohydrate metabolism; tricarboxylic acid cycle; succinate from succinyl-CoA (ligase route): step 1/1. Functionally, succinyl-CoA synthetase functions in the citric acid cycle (TCA), coupling the hydrolysis of succinyl-CoA to the synthesis of either ATP or GTP and thus represents the only step of substrate-level phosphorylation in the TCA. The beta subunit provides nucleotide specificity of the enzyme and binds the substrate succinate, while the binding sites for coenzyme A and phosphate are found in the alpha subunit. The sequence is that of Succinate--CoA ligase [ADP-forming] subunit beta from Rickettsia massiliae (strain Mtu5).